Reading from the N-terminus, the 185-residue chain is Ribosome-recycling factor (185 aa).

It belongs to the RRF family.

The protein localises to the cytoplasm. Responsible for the release of ribosomes from messenger RNA at the termination of protein biosynthesis. May increase the efficiency of translation by recycling ribosomes from one round of translation to another. This Shewanella baltica (strain OS223) protein is Ribosome-recycling factor.